The chain runs to 106 residues: ATP-dependent Clp protease adapter protein ClpS (106 aa).

Residues 1-10 (MSQKTVHDQD) are compositionally biased toward basic and acidic residues. Residues 1 to 23 (MSQKTVHDQDNALLLETGNTKVA) are disordered.

It belongs to the ClpS family. Binds to the N-terminal domain of the chaperone ClpA.

Involved in the modulation of the specificity of the ClpAP-mediated ATP-dependent protein degradation. This Xylella fastidiosa (strain M23) protein is ATP-dependent Clp protease adapter protein ClpS.